Here is a 453-residue protein sequence, read N- to C-terminus: UDP-N-acetylmuramate--L-alanyl-gamma-D-glutamyl-meso-2,6-diaminoheptandioate ligase (453 aa).

111–117 (GTHGKTT) lines the ATP pocket.

The protein belongs to the MurCDEF family. Mpl subfamily. The cofactor is Mg(2+).

It carries out the reaction UDP-N-acetyl-alpha-D-muramate + L-alanyl-gamma-D-glutamyl-meso-2,6-diaminopimelate + ATP = UDP-N-acetyl-alpha-D-muramoyl-L-alanyl-gamma-D-glutamyl-meso-2,6-diaminopimelate + ADP + phosphate + H(+). It functions in the pathway cell wall biogenesis; peptidoglycan recycling. Reutilizes the intact tripeptide L-alanyl-gamma-D-glutamyl-meso-diaminopimelate by linking it to UDP-N-acetylmuramate. In Haemophilus influenzae (strain ATCC 51907 / DSM 11121 / KW20 / Rd), this protein is UDP-N-acetylmuramate--L-alanyl-gamma-D-glutamyl-meso-2,6-diaminoheptandioate ligase.